We begin with the raw amino-acid sequence, 890 residues long: Translation initiation factor IF-2 (890 aa).

A disordered region spans residues Leu45–Ala303. The segment covering Ser67–Val81 has biased composition (polar residues). Over residues Val92–Asp217 the composition is skewed to basic and acidic residues. Positions Gly252 to Asn266 are enriched in basic residues. Residues Lys267–Ala280 are compositionally biased toward basic and acidic residues. The tr-type G domain occupies Pro389–Lys558. A G1 region spans residues Gly398–Thr405. Gly398 to Thr405 contacts GTP. Residues Gly423–His427 form a G2 region. A G3 region spans residues Asp444 to Gly447. Residues Asp444–His448 and Asn498–Asp501 contribute to the GTP site. The tract at residues Asn498–Asp501 is G4. Residues Ser534–Lys536 are G5. Lys808 carries the post-translational modification N6-acetyllysine.

This sequence belongs to the TRAFAC class translation factor GTPase superfamily. Classic translation factor GTPase family. IF-2 subfamily.

It localises to the cytoplasm. Its function is as follows. One of the essential components for the initiation of protein synthesis. Protects formylmethionyl-tRNA from spontaneous hydrolysis and promotes its binding to the 30S ribosomal subunits. Also involved in the hydrolysis of GTP during the formation of the 70S ribosomal complex. The polypeptide is Translation initiation factor IF-2 (Shigella boydii serotype 18 (strain CDC 3083-94 / BS512)).